The following is a 248-amino-acid chain: UPF0246 protein MYPE6270 (248 aa).

This sequence belongs to the UPF0246 family.

This chain is UPF0246 protein MYPE6270, found in Malacoplasma penetrans (strain HF-2) (Mycoplasma penetrans).